The chain runs to 510 residues: NAD(P)H-quinone oxidoreductase subunit 2 B, chloroplastic (510 aa).

Helical transmembrane passes span 24–44 (LLLF…GLIL), 57–77 (IPWL…ALLF), 99–119 (IFQF…VEYI), 124–144 (MAIT…MFLC), 149–169 (LITI…LSGY), 183–203 (YLLM…WLYG), 227–247 (PGIS…LSPA), 295–315 (WHLL…LIAI), 323–343 (MLAY…IVGD), 354–374 (YMLF…LFGL), 395–415 (ALSL…AGFF), 418–438 (LYLF…IGLL), and 484–504 (MIVC…IIAI).

It belongs to the complex I subunit 2 family. In terms of assembly, NDH is composed of at least 16 different subunits, 5 of which are encoded in the nucleus.

It localises to the plastid. Its subcellular location is the chloroplast thylakoid membrane. The enzyme catalyses a plastoquinone + NADH + (n+1) H(+)(in) = a plastoquinol + NAD(+) + n H(+)(out). The catalysed reaction is a plastoquinone + NADPH + (n+1) H(+)(in) = a plastoquinol + NADP(+) + n H(+)(out). Functionally, NDH shuttles electrons from NAD(P)H:plastoquinone, via FMN and iron-sulfur (Fe-S) centers, to quinones in the photosynthetic chain and possibly in a chloroplast respiratory chain. The immediate electron acceptor for the enzyme in this species is believed to be plastoquinone. Couples the redox reaction to proton translocation, and thus conserves the redox energy in a proton gradient. This Daucus carota (Wild carrot) protein is NAD(P)H-quinone oxidoreductase subunit 2 B, chloroplastic.